A 507-amino-acid chain; its full sequence is Hippocampus abundant transcript-like protein 1 (507 aa).

The tract at residues Met1 to Ser22 is disordered. The Extracellular segment spans residues Met1 to Ala51. Residues Phe52–Leu72 traverse the membrane as a helical segment. The Cytoplasmic portion of the chain corresponds to His73–Asn84. A helical membrane pass occupies residues Gly85–Leu105. Topologically, residues Ser106 to Pro113 are extracellular. The helical transmembrane segment at Phe114–Trp134 threads the bilayer. At Trp135 to Tyr136 the chain is on the cytoplasmic side. A helical membrane pass occupies residues Phe137 to Val157. Residues Ala158 to Tyr170 are Extracellular-facing. The chain crosses the membrane as a helical span at residues Gly171 to Leu191. The Cytoplasmic segment spans residues Ser192 to Ser198. A helical transmembrane segment spans residues Leu199 to Val219. Residues Pro220 to Leu257 lie on the Extracellular side of the membrane. A helical membrane pass occupies residues Leu258 to Phe278. The Cytoplasmic portion of the chain corresponds to Leu279 to Gln283. The helical transmembrane segment at Val284–Ile304 threads the bilayer. Residues Leu305–Thr323 lie on the Extracellular side of the membrane. Residues Val324 to Ala344 traverse the membrane as a helical segment. Topologically, residues Trp345–Met347 are cytoplasmic. The helical transmembrane segment at Trp348–Ile368 threads the bilayer. Topologically, residues Ser369–Gly389 are extracellular. Residues Leu390–Leu410 form a helical membrane-spanning segment. At Asn411–Pro430 the chain is on the cytoplasmic side. Residues Gly431 to Ile451 form a helical membrane-spanning segment. Over Pro452 to Leu507 the chain is Extracellular. Polar residues predominate over residues Lys462–Thr473. Positions Lys462–Ile483 are disordered. An N-linked (GlcNAc...) asparagine glycan is attached at Asn464.

This sequence belongs to the major facilitator superfamily.

It is found in the membrane. The protein is Hippocampus abundant transcript-like protein 1 of Rattus norvegicus (Rat).